A 580-amino-acid polypeptide reads, in one-letter code: Rap guanine nucleotide exchange factor 5 (580 aa).

The N-terminal Ras-GEF domain occupies 67–200 (DRYVVVSGTP…ELKEFQKILG (134 aa)). The Ras-GEF domain occupies 344–579 (NTWDLALELM…FELSHRLEPR (236 aa)).

In the embryo, expressed in young neurons of the developing telencephalon, diencephalon and hindbrain. Not expressed in progenitor cells in the ventricular zone.

The protein resides in the nucleus. In terms of biological role, guanine nucleotide exchange factor (GEF) for RAP1A, RAP2A and MRAS/M-Ras-GTP. Its association with MRAS inhibits Rap1 activation. This Rattus norvegicus (Rat) protein is Rap guanine nucleotide exchange factor 5 (Rapgef5).